Reading from the N-terminus, the 21-residue chain is Conchiolin protein p20 (21 aa).

Low complexity predominate over residues 1-14 (YQRXSRYYYYXGPP). Residues 1 to 21 (YQRXSRYYYYXGPPDDIDDRY) form a disordered region.

The protein belongs to the N16 matrix protein family. In terms of assembly, homooligomer; disulfide-linked. May also be disulfide-linked to insoluble organic matrix. In terms of processing, according to PubMed:11250534, amino acids 4 and 11 may be sulfated or phosphorylated. By similarity with the N14 matrix protein, amino-acid 4 may be a cysteine involved in a disulfide bond. As to expression, component of conchiolin, the organic matrix of nacre. Is dispersed in calcium carbonate and also linked by disulfide bonds to the organic core of nacre.

Its subcellular location is the secreted. The protein localises to the extracellular space. It is found in the extracellular matrix. In terms of biological role, may be specifically involved in the formation of the nacreous layer. This Pinctada maxima (Silver-lipped pearl oyster) protein is Conchiolin protein p20.